The sequence spans 218 residues: Hypoxanthine-guanine phosphoribosyltransferase (218 aa).

A2 is subject to N-acetylalanine. K69 contacts GMP. Position 103 is an N6-acetyllysine (K103). K115 participates in a covalent cross-link: Glycyl lysine isopeptide (Lys-Gly) (interchain with G-Cter in SUMO1); alternate. Residue K115 forms a Glycyl lysine isopeptide (Lys-Gly) (interchain with G-Cter in SUMO2); alternate linkage. Residues 134 to 142 (EDIIDTGKT), K166, 186 to 188 (KFV), and D194 each bind GMP. The active-site Proton acceptor is D138. Position 142 is a phosphothreonine (T142). D194 is a Mg(2+) binding site.

Belongs to the purine/pyrimidine phosphoribosyltransferase family. As to quaternary structure, homotetramer. Mg(2+) serves as cofactor.

The protein localises to the cytoplasm. The enzyme catalyses IMP + diphosphate = hypoxanthine + 5-phospho-alpha-D-ribose 1-diphosphate. The catalysed reaction is GMP + diphosphate = guanine + 5-phospho-alpha-D-ribose 1-diphosphate. It participates in purine metabolism; IMP biosynthesis via salvage pathway; IMP from hypoxanthine: step 1/1. Converts guanine to guanosine monophosphate, and hypoxanthine to inosine monophosphate. Transfers the 5-phosphoribosyl group from 5-phosphoribosylpyrophosphate onto the purine. Plays a central role in the generation of purine nucleotides through the purine salvage pathway. This is Hypoxanthine-guanine phosphoribosyltransferase (HPRT1) from Sus scrofa (Pig).